Here is a 338-residue protein sequence, read N- to C-terminus: 1-aminocyclopropane-1-carboxylate deaminase (338 aa).

Lys51 carries the N6-(pyridoxal phosphate)lysine modification. Ser78 acts as the Nucleophile in catalysis.

The protein belongs to the ACC deaminase/D-cysteine desulfhydrase family. Homotrimer. Pyridoxal 5'-phosphate is required as a cofactor.

The enzyme catalyses 1-aminocyclopropane-1-carboxylate + H2O = 2-oxobutanoate + NH4(+). In terms of biological role, catalyzes a cyclopropane ring-opening reaction, the irreversible conversion of 1-aminocyclopropane-1-carboxylate (ACC) to ammonia and alpha-ketobutyrate. Allows growth on ACC as a nitrogen source. This is 1-aminocyclopropane-1-carboxylate deaminase from Pseudomonas putida (Arthrobacter siderocapsulatus).